A 142-amino-acid polypeptide reads, in one-letter code: 3-hydroxyacyl-[acyl-carrier-protein] dehydratase FabZ (142 aa).

The active site involves His48.

Belongs to the thioester dehydratase family. FabZ subfamily.

Its subcellular location is the cytoplasm. The enzyme catalyses a (3R)-hydroxyacyl-[ACP] = a (2E)-enoyl-[ACP] + H2O. Functionally, involved in unsaturated fatty acids biosynthesis. Catalyzes the dehydration of short chain beta-hydroxyacyl-ACPs and long chain saturated and unsaturated beta-hydroxyacyl-ACPs. In Desulforamulus reducens (strain ATCC BAA-1160 / DSM 100696 / MI-1) (Desulfotomaculum reducens), this protein is 3-hydroxyacyl-[acyl-carrier-protein] dehydratase FabZ.